The primary structure comprises 236 residues: Envelope glycoprotein (236 aa).

Over 1-202 (CQFDGNTISG…EWILGVLNGN (202 aa)) the chain is Lumenal. Residue Asn-25 is glycosylated (N-linked (GlcNAc...) asparagine; by host). 5 cysteine pairs are disulfide-bonded: Cys-67–Cys-97, Cys-90–Cys-142, Cys-107–Cys-112, Cys-143–Cys-148, and Cys-182–Cys-186. A helical membrane pass occupies residues 203–223 (WMVVAVLIALLILSILLFTLC). 2 binding to the ribonucleoprotein regions span residues 219 to 231 (LFTL…PSYR) and 219 to 236 (LFTL…EHKP). The Cytoplasmic segment spans residues 224-236 (CPRRPSYRKEHKP).

The protein belongs to the hantavirus envelope glycoprotein family. In terms of assembly, homodimer. Homotetramer; forms heterotetrameric Gn-Gc spikes in the pre-fusion conformation. Homotrimer; forms homotrimer in the post-fusion conformation at acidic pH. Interacts (via C-terminus) with the nucleoprotein. In terms of processing, envelope polyprotein precursor is quickly cleaved in vivo just after synthesis, presumably by host signal peptidase.

It localises to the virion membrane. The protein localises to the host cell surface. It is found in the host Golgi apparatus membrane. Its subcellular location is the host endoplasmic reticulum membrane. Forms homotetramers with glycoprotein N at the surface of the virion. Attaches the virion to host cell receptors including integrin ITGAV/ITGB3. This attachment induces virion internalization predominantly through clathrin-dependent endocytosis. Class II fusion protein that promotes fusion of viral membrane with host endosomal membrane after endocytosis of the virion. The protein is Envelope glycoprotein (GP) of Homo sapiens (Human).